Consider the following 304-residue polypeptide: Homoserine dehydrogenase (304 aa).

NADP(+) contacts are provided by tyrosine 8, asparagine 10, valine 11, arginine 38, arginine 39, and serine 73. Tyrosine 8 contributes to the NADPH binding site. Positions 11 and 38 each coordinate NADPH. Valine 11 serves as a coordination point for NAD(+). The NADPH site is built by serine 73, serine 74, threonine 100, and lysine 102. NAD(+) is bound at residue serine 73. Residues threonine 100 and lysine 102 each coordinate NADP(+). Residues valine 129 and threonine 133 each contribute to the Na(+) site. Residues glycine 182 and glutamate 185 each contribute to the NADP(+) site. L-homoserine contacts are provided by glutamate 185 and aspartate 196. Lysine 200 (proton donor) is an active-site residue. An NADP(+)-binding site is contributed by glycine 284. Residue glycine 284 participates in NADPH binding. Glycine 284 contributes to the NAD(+) binding site.

Belongs to the homoserine dehydrogenase family. Homodimer. Requires a metal cation as cofactor. The enzyme is activated by reductive cleavage of the interchain disulfide bond between the two subunits.

The enzyme catalyses L-homoserine + NADP(+) = L-aspartate 4-semialdehyde + NADPH + H(+). It catalyses the reaction L-homoserine + NAD(+) = L-aspartate 4-semialdehyde + NADH + H(+). The protein operates within amino-acid biosynthesis; L-methionine biosynthesis via de novo pathway; L-homoserine from L-aspartate: step 3/3. It participates in amino-acid biosynthesis; L-threonine biosynthesis; L-threonine from L-aspartate: step 3/5. With respect to regulation, inhibited by cysteine. Catalyzes the conversion of L-aspartate-beta-semialdehyde (L-Asa) to L-homoserine (L-Hse), the third step in the biosynthesis of threonine and methionine from aspartate. In Sulfurisphaera tokodaii (strain DSM 16993 / JCM 10545 / NBRC 100140 / 7) (Sulfolobus tokodaii), this protein is Homoserine dehydrogenase.